The following is a 499-amino-acid chain: Probable malate:quinone oxidoreductase 4 (499 aa).

It belongs to the MQO family. FAD is required as a cofactor.

It catalyses the reaction (S)-malate + a quinone = a quinol + oxaloacetate. It functions in the pathway carbohydrate metabolism; tricarboxylic acid cycle; oxaloacetate from (S)-malate (quinone route): step 1/1. This is Probable malate:quinone oxidoreductase 4 from Staphylococcus epidermidis (strain ATCC 12228 / FDA PCI 1200).